The chain runs to 333 residues: Glycerol-3-phosphate dehydrogenase [NAD(P)+] (333 aa).

Residues Trp12, Lys33, and Lys105 each contribute to the NADPH site. Residues Lys105, Gly136, and Ser138 each contribute to the sn-glycerol 3-phosphate site. Ala140 is an NADPH binding site. Residues Lys191, Asp244, Ser254, Arg255, and Asn256 each contribute to the sn-glycerol 3-phosphate site. Residue Lys191 is the Proton acceptor of the active site. Arg255 lines the NADPH pocket. The NADPH site is built by Val279 and Glu281.

The protein belongs to the NAD-dependent glycerol-3-phosphate dehydrogenase family.

Its subcellular location is the cytoplasm. The catalysed reaction is sn-glycerol 3-phosphate + NAD(+) = dihydroxyacetone phosphate + NADH + H(+). It catalyses the reaction sn-glycerol 3-phosphate + NADP(+) = dihydroxyacetone phosphate + NADPH + H(+). Its pathway is membrane lipid metabolism; glycerophospholipid metabolism. Its function is as follows. Catalyzes the reduction of the glycolytic intermediate dihydroxyacetone phosphate (DHAP) to sn-glycerol 3-phosphate (G3P), the key precursor for phospholipid synthesis. The protein is Glycerol-3-phosphate dehydrogenase [NAD(P)+] of Protochlamydia amoebophila (strain UWE25).